We begin with the raw amino-acid sequence, 137 residues long: Small ribosomal subunit protein uS19 (137 aa).

This sequence belongs to the universal ribosomal protein uS19 family.

Protein S19 forms a complex with S13 that binds strongly to the 16S ribosomal RNA. The protein is Small ribosomal subunit protein uS19 of Methanoculleus marisnigri (strain ATCC 35101 / DSM 1498 / JR1).